A 628-amino-acid polypeptide reads, in one-letter code: Patulin synthase (628 aa).

The N-terminal stretch at 1 to 19 (MRLTSGIFHAAIAVAAVGA) is a signal peptide. Asn-49 carries N-linked (GlcNAc...) asparagine glycosylation. Residues 61–62 (TA) and 82–83 (EA) contribute to the FAD site. N-linked (GlcNAc...) asparagine glycosylation is present at Asn-93. Residue 148-151 (NYMA) participates in FAD binding. Asn-198, Asn-261, Asn-283, Asn-429, Asn-486, and Asn-526 each carry an N-linked (GlcNAc...) asparagine glycan. His-564 (proton acceptor) is an active-site residue. N-linked (GlcNAc...) asparagine glycosylation occurs at Asn-575. Residues Ala-598 and 609-610 (PQ) contribute to the FAD site.

Belongs to the GMC oxidoreductase family. FAD serves as cofactor.

Its subcellular location is the cytoplasm. The protein resides in the cell cortex. The protein localises to the vacuole. It is found in the secreted. It localises to the cell wall. It carries out the reaction (E)-ascladiol + A = patulin + AH2. It functions in the pathway mycotoxin biosynthesis; patulin biosynthesis. Functionally, patulin synthase; part of the gene cluster that mediates the biosynthesis of patulin, an acetate-derived tetraketide mycotoxin produced by several fungal species that shows antimicrobial properties against several bacteria. PatE catalyzes the last step of the pathway which is the conversion of E-ascladiol to patulin. The pathway begins with the synthesis of 6-methylsalicylic acid by the polyketide synthase (PKS) patK via condensation of acetate and malonate units. The 6-methylsalicylic acid decarboxylase patG then catalyzes the decarboxylation of 6-methylsalicylic acid to yield m-cresol (also known as 3-methylphenol). These first reactions occur in the cytosol. The intermediate m-cresol is then transported into the endoplasmic reticulum where the cytochrome P450 monooxygenase patH converts it to m-hydroxybenzyl alcohol, which is further converted to gentisyl alcohol by the cytochrome P450 monooxygenase patI. The oxidoreductases patJ and patO further convert gentisyl alcohol to isoepoxydon in the vacuole. PatN catalyzes then the transformation of isoepoxydon into phyllostine. The cluster protein patF is responsible for the conversion from phyllostine to neopatulin whereas the alcohol dehydrogenase patD converts neopatulin to E-ascladiol. The steps between isoepoxydon and E-ascladiol occur in the cytosol, and E-ascladiol is probably secreted to the extracellular space by one of the cluster-specific transporters patC or patM. Finally, the secreted patulin synthase patE catalyzes the conversion of E-ascladiol to patulin. The polypeptide is Patulin synthase (Penicillium expansum (Blue mold rot fungus)).